Reading from the N-terminus, the 932-residue chain is MRGKSRFSLGLVILAGALLFSLIGWGAGLYIEWLWFKTLNYQQVFLTRLTSEIGLRVLVGIIMFLLLLINLMLTRKSVLKAVESAKAFRPFQRDDDNVITINPNPQIDWREQITPGRLTLAFTLLSMALGFLYSSSVAGDWVTILQYFNQSSFNITDPIFNKNLGFYFFSLPFWHIVYRILASAIFLNIVLVALVYLVTDTARGGLAKIFRFPSARYHLSVLAALFFVIKSWGYRLDQYDLLYSSTGVVHGAGYTDIHATLLAYKALMILSLVTAIIIIANIFLNRFRLTAYAIGGLLVTSILLGSVYPAIIQKFVVLPNEFNREIPYIANNIKFSQQAYNLDKIEQKDFPAGRTLQAKDIQENKNTIDNIRLWDWQPLRQTYSQLQEMRLYYEFKNIDIDRYAIDEEYRQIMIAVREMNQDQLPQQAKTWINQRLKYTHGYGIAMSPVNEVSGEGLPHFFLKDIPPVASTNIKINRPEIYYGESDDGYVIVNTKTDEFDYPKGDGNSYSKYEGDSGVKVNSFFRKLLFAFTFADYKLLFTGDITNESQVLFYRNIKERIPKIAPFLSYDADPYPVINNQGEIYWMWDAYTISNMYPYSEPFDDRGNNYIRNSVKVTMNAYNGSVNFYISDAEDPIIKTYAKIFPGMFRPLSEMPEDLKKHIRYPEDMFLVQSRMYSLYHMTDPQVFYNREDKWTLPTEKVGEEEKAMDPYYTITVLPGEKNPEYLLIMPFNPQNKKNMIAWLGARSDGENYGKMVVYEFPKQELVYGPMQIEARIDQDTTISQQLSLWDQRGSSVIRGNLLVIPVEDSLLYVEPLYLQSEQSKMPELRRVIVASGDKIVMEPTLELALQKIYGEGAVLKDRPQQGVPPATDQPAGQQPAPEKTVKELAAEANRLYDDAQAKLKAGDWAGYGQSLNQLKDILTKLQNQSFSQ.

The next 7 membrane-spanning stretches (helical) occupy residues 11-31 (LVIL…GLYI), 53-73 (IGLR…NLML), 118-138 (LTLA…SSVA), 180-200 (ILAS…LVTD), 209-229 (IFRF…FFVI), 264-284 (YKAL…NIFL), and 292-312 (YAIG…PAII). The segment at 861 to 883 (DRPQQGVPPATDQPAGQQPAPEK) is disordered.

Belongs to the UPF0182 family.

It is found in the cell membrane. The chain is UPF0182 protein Dred_1797 from Desulforamulus reducens (strain ATCC BAA-1160 / DSM 100696 / MI-1) (Desulfotomaculum reducens).